Here is a 294-residue protein sequence, read N- to C-terminus: UDP-3-O-acyl-N-acetylglucosamine deacetylase (294 aa).

Residues His75, His232, and Asp236 each contribute to the Zn(2+) site. Residue His259 is the Proton donor of the active site.

It belongs to the LpxC family. It depends on Zn(2+) as a cofactor.

The enzyme catalyses a UDP-3-O-[(3R)-3-hydroxyacyl]-N-acetyl-alpha-D-glucosamine + H2O = a UDP-3-O-[(3R)-3-hydroxyacyl]-alpha-D-glucosamine + acetate. Its pathway is glycolipid biosynthesis; lipid IV(A) biosynthesis; lipid IV(A) from (3R)-3-hydroxytetradecanoyl-[acyl-carrier-protein] and UDP-N-acetyl-alpha-D-glucosamine: step 2/6. Functionally, catalyzes the hydrolysis of UDP-3-O-myristoyl-N-acetylglucosamine to form UDP-3-O-myristoylglucosamine and acetate, the committed step in lipid A biosynthesis. The chain is UDP-3-O-acyl-N-acetylglucosamine deacetylase from Campylobacter hominis (strain ATCC BAA-381 / DSM 21671 / CCUG 45161 / LMG 19568 / NCTC 13146 / CH001A).